Here is a 1230-residue protein sequence, read N- to C-terminus: Cullin-associated NEDD8-dissociated protein 1 (1230 aa).

Alanine 2 is subject to N-acetylalanine. HEAT repeat units follow at residues 2 to 39 (ASASYHISNLLEKMTSSDKDFRFMATNDLMTELQKDSI), 44 to 81 (DSERKVVKMILRLLEDKNGEVQNLAVKCLGPLVSKVKE), 83 to 119 (QVETIVDTLCTNMLSDKEQLRDISSIGLKTVIGELPP), 131 to 165 (CKKITGRLTSAIAKQEDVSVQLEALDIMADMLSRQ), 171 to 208 (NFHPSILTCLLPQLTSPRLAVRKRTIIALGHLVMSCGN), 210 to 247 (VFVDLIEHLLSELSKNDSMSTTRTYIQCIAAISRQAGH), 248 to 282 (RIGEYLEKIIPLVVKFCNVDDDELREYCIQAFESF), 289 to 366 (EVYP…TRHE), 370 to 407 (EFYKTVSPALIARFKEREENVKADVFHAYLSLLKQTRP), 424 to 467 (PLTM…VLPG), 471 to 510 (QHIPVLVPGIIFSLNDKSSSSNLKIDALSCLYVILCNHSP), and 515 to 552 (PHVQALVPPVVACVGDPFYKITSEALLVTQQLVKVIRP). The tract at residues 315–344 (DEDEDENAMDADGGDDDDQGSDDEYSDDDD) is disordered. Serine 335 is subject to Phosphoserine. Serine 558 carries the phosphoserine modification. 15 HEAT repeats span residues 563 to 602 (PYIKDLFTCTIKRLKAADIDQEVKERAISCMGQIICNLGD), 606 to 643 (PDLSNTLQIFLERLKNEITRLTTVKALTLIAGSPLKID), 646 to 683 (PVLGEGVPILASFLRKNQRALKLGTLSALDILIKNYSD), 688 to 725 (AMIDAVLDELPPLISESDMHVSQMAISFLTTLAKVYPS), 729 to 768 (KISGSILNELIGLVRSPLLQGGALSAMLDFFQALVVTGTN), 770 to 808 (LGYMDLLRMLTGPVYSQSTALTHKQSYYSIAKCVAALTR), 809 to 845 (ACPKEGPAVVGQFIQDVKNSRSTDSIRLLALLSLGEV), 852 to 889 (SGQLELKSVILEAFSSPSEEVKSAASYALGSISVGNLP), 890 to 927 (EYLPFVLQEITSQPKRQYLLLHSLKEIISSASVAGLKP), 928 to 960 (YVENIWALLLKHCECAEEGTRNVVAECLGKLTL), 961 to 998 (IDPETLLPRLKGYLISGSSYARSSVVTAVKFTISDHPQ), 1002 to 1039 (PLLKNCIGDFLKTLEDPDLNVRRVALVTFNSAAHNKPS), 1043 to 1097 (DLLD…DSCL), 1099 to 1133 (RLDIFEFLNHVEDGLKDHYDIKMLTFLMLVRLSTL), and 1140 to 1189 (QRLD…IPEA). At lysine 971 the chain carries N6-acetyllysine.

This sequence belongs to the CAND family. Interacts with TBP. Part of a complex that contains CUL1 and RBX1. Interacts with unneddylated cullins: interacts with CUL1, CUL2, CUL3, CUL4A, CUL4B and CUL5. Does not bind neddylated CUL1. Interaction with cullins is abolished in presence of COMMD1, which antagonizes with CAND1 for interacting with cullins. Interacts with ERCC6. Interacts with DCUN1D1, DCUN1D2, DCUN1D3, DCUN1D4 and DCUN1D5; these interactions are bridged by cullins and strongly inhibits the neddylation of cullins.

The protein localises to the cytoplasm. It localises to the nucleus. Key assembly factor of SCF (SKP1-CUL1-F-box protein) E3 ubiquitin ligase complexes that promotes the exchange of the substrate-recognition F-box subunit in SCF complexes, thereby playing a key role in the cellular repertoire of SCF complexes. Acts as a F-box protein exchange factor. The exchange activity of CAND1 is coupled with cycles of neddylation conjugation: in the deneddylated state, cullin-binding CAND1 binds CUL1-RBX1, increasing dissociation of the SCF complex and promoting exchange of the F-box protein. Probably plays a similar role in other cullin-RING E3 ubiquitin ligase complexes. The sequence is that of Cullin-associated NEDD8-dissociated protein 1 (Cand1) from Mus musculus (Mouse).